We begin with the raw amino-acid sequence, 214 residues long: Adenylate kinase (214 aa).

10 to 15 (GAGKGT) contacts ATP. The segment at 30–59 (ATGDVLRAAVKEGTPLGLEAKAAMDRGDLV) is NMP. AMP contacts are provided by residues threonine 31, arginine 36, 57-59 (DLV), and glutamine 92. An LID region spans residues 126-161 (GRTTCEACQRPFFGRQPGETCTEGGVSGTLVRRKDD). Arginine 127 lines the ATP pocket. Residues arginine 158 and arginine 169 each contribute to the AMP site. An ATP-binding site is contributed by glycine 198.

This sequence belongs to the adenylate kinase family. As to quaternary structure, monomer.

It is found in the cytoplasm. The enzyme catalyses AMP + ATP = 2 ADP. It functions in the pathway purine metabolism; AMP biosynthesis via salvage pathway; AMP from ADP: step 1/1. Its function is as follows. Catalyzes the reversible transfer of the terminal phosphate group between ATP and AMP. Plays an important role in cellular energy homeostasis and in adenine nucleotide metabolism. The sequence is that of Adenylate kinase from Gemmatimonas aurantiaca (strain DSM 14586 / JCM 11422 / NBRC 100505 / T-27).